The primary structure comprises 208 residues: MRKIRTKICGITTPEDASAAVAAGADAVGLVFFQGSSRAVDIARAKKITAALPPFVSVVALFVNESAQNIRRILAEVPIHIIQFHGDEDDTFCRQFDRPYIKAIRVQTASDIRNAADRFPDAQALLFDAYHPSEYGGTGHRFDWTLLAEYSGKPWVLAGGLTPENVGEAVRITGAEAVDVSGGVEASKGKKDPAKVAAFIATANRLSR.

The protein belongs to the TrpF family.

It catalyses the reaction N-(5-phospho-beta-D-ribosyl)anthranilate = 1-(2-carboxyphenylamino)-1-deoxy-D-ribulose 5-phosphate. It functions in the pathway amino-acid biosynthesis; L-tryptophan biosynthesis; L-tryptophan from chorismate: step 3/5. This Neisseria meningitidis serogroup C / serotype 2a (strain ATCC 700532 / DSM 15464 / FAM18) protein is N-(5'-phosphoribosyl)anthranilate isomerase.